A 263-amino-acid polypeptide reads, in one-letter code: Thiazole synthase (263 aa).

The active-site Schiff-base intermediate with DXP is the Lys-100. 1-deoxy-D-xylulose 5-phosphate contacts are provided by residues Gly-161, 187 to 188 (AG), and 209 to 210 (NT).

The protein belongs to the ThiG family. In terms of assembly, homotetramer. Forms heterodimers with either ThiH or ThiS.

It localises to the cytoplasm. The catalysed reaction is [ThiS sulfur-carrier protein]-C-terminal-Gly-aminoethanethioate + 2-iminoacetate + 1-deoxy-D-xylulose 5-phosphate = [ThiS sulfur-carrier protein]-C-terminal Gly-Gly + 2-[(2R,5Z)-2-carboxy-4-methylthiazol-5(2H)-ylidene]ethyl phosphate + 2 H2O + H(+). It participates in cofactor biosynthesis; thiamine diphosphate biosynthesis. Functionally, catalyzes the rearrangement of 1-deoxy-D-xylulose 5-phosphate (DXP) to produce the thiazole phosphate moiety of thiamine. Sulfur is provided by the thiocarboxylate moiety of the carrier protein ThiS. In vitro, sulfur can be provided by H(2)S. This Shouchella clausii (strain KSM-K16) (Alkalihalobacillus clausii) protein is Thiazole synthase.